The primary structure comprises 141 residues: Putative pre-16S rRNA nuclease (141 aa).

It belongs to the YqgF nuclease family.

It is found in the cytoplasm. Functionally, could be a nuclease involved in processing of the 5'-end of pre-16S rRNA. The polypeptide is Putative pre-16S rRNA nuclease (Shewanella denitrificans (strain OS217 / ATCC BAA-1090 / DSM 15013)).